A 1603-amino-acid chain; its full sequence is GATOR1 complex protein DEPDC5 (1603 aa).

3 disordered regions span residues 427–450, 484–527, and 696–720; these read GKKP…KESE, VRER…SSLG, and LSNS…VSTS. Basic and acidic residues predominate over residues 430–439; the sequence is PASEKAKNGR. Residues 494-508 are compositionally biased toward low complexity; the sequence is SASSCDVSSSPSLPS. Ser505 is modified (phosphoserine). 2 stretches are compositionally biased toward polar residues: residues 518 to 527 and 696 to 707; these read SQASDDSSLG and LSNSGAGMNPRT. The residue at position 1002 (Ser1002) is a Phosphoserine; by PIM1. Residues 1135–1153 are compositionally biased toward polar residues; that stretch reads DRGNSQTFGNSQNIGEQGY. The tract at residues 1135–1165 is disordered; that stretch reads DRGNSQTFGNSQNIGEQGYSSTNSSDSSSQQ. Low complexity predominate over residues 1154 to 1165; it reads SSTNSSDSSSQQ. Residues 1187 to 1262 form the DEP domain; that stretch reads PSTGVQLLSE…YGFYFYKIVT (76 aa). Ser1530 carries the post-translational modification Phosphoserine; by PKB/AKT1 and PIM1.

This sequence belongs to the IML1 family. In terms of assembly, within the GATOR complex, component of the GATOR1 subcomplex, made of DEPDC5, NPRL2 and NPRL3. GATOR1 mediates the strong interaction of the GATOR complex with small GTPases Rag (RagA/RRAGA, RagB/RRAGB, RagC/RRAGC and/or RagD/RRAGD) heterodimers. Interacts with SAMTOR; interaction is direct and takes place in presence of methionine, leading to inhibit the activity of the GATOR1 complex. Post-translationally, phosphorylation at Ser-1002 and Ser-1530 by AKT1 and PIM1 inhibit the activity of DEPDC5, releasing inhibition of the mTORC1 pathway. Ubiquitinated. Amino acid-induced 'Lys-48'-linked polyubiquitination of DEPDC5 by the BCR(KLHL22) ubiquitin ligase complex leads to DEPDC5 proteasomal degradation and inhibition of the GATOR1 complex. Ubiquitination may occur at multiple lysines. Expressed in developing and adult brain.

Its subcellular location is the lysosome membrane. The protein resides in the cytoplasm. It is found in the cytosol. The protein localises to the perinuclear region. As a component of the GATOR1 complex functions as an inhibitor of the amino acid-sensing branch of the mTORC1 pathway. In response to amino acid depletion, the GATOR1 complex has GTPase activating protein (GAP) activity and strongly increases GTP hydrolysis by RagA/RRAGA (or RagB/RRAGB) within heterodimeric Rag complexes, thereby turning them into their inactive GDP-bound form, releasing mTORC1 from lysosomal surface and inhibiting mTORC1 signaling. In the presence of abundant amino acids, the GATOR1 complex is negatively regulated by GATOR2, the other GATOR subcomplex, in this amino acid-sensing branch of the TORC1 pathway. Within the GATOR1 complex, DEPDC5 mediates direct interaction with the nucleotide-binding pocket of small GTPases Rag (RagA/RRAGA, RagB/RRAGB, RagC/RRAGC and/or RagD/RRAGD) and coordinates their nucleotide loading states by promoting RagA/RRAGA or RagB/RRAGB into their GDP-binding state and RagC/RRAGC or RagD/RRAGD into their GTP-binding state. However, it does not execute the GAP activity, which is mediated by NPRL2. The chain is GATOR1 complex protein DEPDC5 from Homo sapiens (Human).